We begin with the raw amino-acid sequence, 89 residues long: Large ribosomal subunit protein bL27 (89 aa).

The disordered stretch occupies residues 1–23; sequence MAHKKAGGSSRNGRDSHSKRLGV.

This sequence belongs to the bacterial ribosomal protein bL27 family.

This Mesorhizobium japonicum (strain LMG 29417 / CECT 9101 / MAFF 303099) (Mesorhizobium loti (strain MAFF 303099)) protein is Large ribosomal subunit protein bL27.